Consider the following 483-residue polypeptide: ATP synthase subunit beta (483 aa).

169–176 contributes to the ATP binding site; sequence GGAGVGKT.

It belongs to the ATPase alpha/beta chains family. In terms of assembly, F-type ATPases have 2 components, CF(1) - the catalytic core - and CF(0) - the membrane proton channel. CF(1) has five subunits: alpha(3), beta(3), gamma(1), delta(1), epsilon(1). CF(0) has three main subunits: a(1), b(2) and c(9-12). The alpha and beta chains form an alternating ring which encloses part of the gamma chain. CF(1) is attached to CF(0) by a central stalk formed by the gamma and epsilon chains, while a peripheral stalk is formed by the delta and b chains.

Its subcellular location is the cell membrane. It catalyses the reaction ATP + H2O + 4 H(+)(in) = ADP + phosphate + 5 H(+)(out). In terms of biological role, produces ATP from ADP in the presence of a proton gradient across the membrane. The catalytic sites are hosted primarily by the beta subunits. In Rhodococcus opacus (strain B4), this protein is ATP synthase subunit beta.